Consider the following 483-residue polypeptide: Rhamnulokinase (483 aa).

11–15 (ASSGR) lines the ATP pocket. Substrate-binding positions include G79 and 234–236 (HDT). D235 acts as the Proton acceptor in catalysis. Residue T257 coordinates ATP. N294 is a binding site for substrate. Q302 is an ATP binding site. An intrachain disulfide couples C352 to C369. Residue G401 participates in ATP binding.

The protein belongs to the rhamnulokinase family. The cofactor is Mg(2+).

The enzyme catalyses L-rhamnulose + ATP = L-rhamnulose 1-phosphate + ADP + H(+). It functions in the pathway carbohydrate degradation; L-rhamnose degradation; glycerone phosphate from L-rhamnose: step 2/3. Involved in the catabolism of L-rhamnose (6-deoxy-L-mannose). Catalyzes the transfer of the gamma-phosphate group from ATP to the 1-hydroxyl group of L-rhamnulose to yield L-rhamnulose 1-phosphate. The chain is Rhamnulokinase from Listeria monocytogenes serotype 4b (strain F2365).